A 398-amino-acid chain; its full sequence is Selenide, water dikinase (398 aa).

The segment at 1–21 (MSHKRPQSSAGESNGAVDLKT) is disordered. Cys46 is an active-site residue. ATP contacts are provided by residues Lys49, 72-74 (GMD), Asp97, Asp120, and 171-174 (GGQT). Asp74 lines the Mg(2+) pocket. Asp120 contributes to the Mg(2+) binding site. Residue Asp278 coordinates Mg(2+).

The protein belongs to the selenophosphate synthase 1 family. Class I subfamily. Homodimer. Mg(2+) serves as cofactor.

It carries out the reaction hydrogenselenide + ATP + H2O = selenophosphate + AMP + phosphate + 2 H(+). Functionally, synthesizes selenophosphate from selenide and ATP. This chain is Selenide, water dikinase, found in Leishmania major.